Reading from the N-terminus, the 80-residue chain is Large ribosomal subunit protein uL30 (80 aa).

It belongs to the universal ribosomal protein uL30 family. In terms of assembly, part of the 50S ribosomal subunit.

This chain is Large ribosomal subunit protein uL30, found in Vesicomyosocius okutanii subsp. Calyptogena okutanii (strain HA).